A 618-amino-acid polypeptide reads, in one-letter code: MRCLAARVNYKTLIIICALFTLVTVLLWNKCSSDKAIQFPRHLSSGFRVDGLEKRSAASESNHYANHIAKQQSEEAFPQEQQKAPPVVGGFNSNGGSKVLGLKYEEIDCLINDEHTIKGRREGNEVFLPFTWVEKYFDVYGKVVQYDGYDRFEFSHSYSKVYAQRSPYHPDGVFMSFEGYNVEVRDRVKCISGVEGVPLSTQWGPQGYFYPIQIAQYGLSHYSKNLTEKPPHIEVYETAEDRDRNIRPNEWTVPKGCFMASVADKSRSTNVKQFIAPETSEGVSLQLGNTKDFIISFDLKLLTNGSVSVVLETTEKNQLFTVHYVSNTQLIAFRDRDIYYGIGPRTSWSTVTRDLVTDLRKGVGLSNTKAVKPTKIMPKKVVRLIAKGKGFLDNITISTTAHMAAFFAASDWLVRNQDEKGGWPIMVTRKLGEGFKSLEPGWYSAMAQGQAISTLVRAYLLTKDYVFLSSALRATAPYKFPSEQHGVKAVFMNKHDWYEEYPTTPSSFVLNGFMYSLIGLYDLKETAGETLGKEARSLYERGMESLKAMLPLYDTGSGTIYDLRHFMLGIAPNLARWDYHTTHINQLQLLSTIDESPIFKEFVKRWKSYLKGSRAKHN.

The Cytoplasmic segment spans residues 1-11 (MRCLAARVNYK). Residues 12 to 29 (TLIIICALFTLVTVLLWN) form a helical; Signal-anchor for type II membrane protein membrane-spanning segment. Residues 30-618 (KCSSDKAIQF…YLKGSRAKHN (589 aa)) are Lumenal-facing. Substrate-binding positions include tyrosine 180, 185–187 (RDR), glutamine 202, tyrosine 210, glutamine 213, and glutamine 216. 5 residues coordinate Ca(2+): threonine 238, glutamate 240, threonine 269, asparagine 270, and aspartate 393. Residues 430–433 (KLGE), 500–501 (EY), asparagine 511, tyrosine 515, tyrosine 561, arginine 564, and 573–582 (NLARWDYHTT) each bind substrate.

Belongs to the D-glucuronyl C5-epimerase family. As to quaternary structure, homodimer. Interacts with HS2ST1. In terms of tissue distribution, widely expressed with highest levels in lung and lowest levels in spleen.

Its subcellular location is the golgi apparatus membrane. It carries out the reaction [heparosan-N-sulfate](n) = [heparan-N-sulfate](n). Its pathway is glycan metabolism; heparan sulfate biosynthesis. The protein operates within glycan metabolism; heparin biosynthesis. Its function is as follows. Converts D-glucuronic acid residues adjacent to N-sulfate sugar residues to L-iduronic acid residues, both in maturing heparan sulfate (HS) and heparin chains. This is important for further modifications that determine the specificity of interactions between these glycosaminoglycans and proteins. This chain is D-glucuronyl C5-epimerase (Glce), found in Mus musculus (Mouse).